Consider the following 489-residue polypeptide: Virion host shutoff protein (489 aa).

4 disordered regions span residues 110-135 (EEAS…AFSN), 142-161 (SLAS…PSAA), 285-319 (RSQT…ETRV), and 332-364 (GYED…LTPP). A compositionally biased stretch (polar residues) spans 124–134 (ITDSRPSSAFS).

Belongs to the herpesviridae VHS protein family. As to quaternary structure, interacts with human EIF4H, EIF4A1 and EIF4A2; interaction with eIF4AI and EIF4A2 presumably allows Vhs protein to associate with the eIF4F cap-binding complex.

Its subcellular location is the virion. In terms of biological role, minor structural protein that acts as an endoribonuclease during lytic infection. Degrades host mRNAs in the cytoplasm by cutting them at preferred sites, including some in regions of translation initiation. Together with inhibition of host splicing by ICP27, contributes to an overall decrease in host protein synthesis. Also, after the onset of viral transcription, accelerates the turnover of viral mRNA, thereby facilitating the sequential expression of different classes of viral genes. Binds translation initiation factors eIF4H, eIF4AI, and eIF4AII, thereby may interact directly with the translation initiation complex and thus digest specifically mRNAs. Also impedes antigen presentation by major histocompatibility complex class I and class II molecules, inhibits secretion of cytokines that would otherwise recruit lymphocytes and neutrophils cells to the site of infection and blocks the activation of dendritic cells. Plays a role in the inhibition of interferon-beta activation by the cGAS/STING pathway. Mechanistically, down-regulates the expression of host cGAS/MB21D1. Also decreases the accumulation of other interferon-induced mRNAs such as host IFIT3 or CH25H to subvert their antiviral activity. The sequence is that of Virion host shutoff protein (UL41) from Human herpesvirus 1 (strain 17) (HHV-1).